The primary structure comprises 596 residues: Arginine--tRNA ligase (596 aa).

The 'HIGH' region motif lies at 128–138 (ANPTSSLHVGH).

Belongs to the class-I aminoacyl-tRNA synthetase family. In terms of assembly, monomer.

The protein resides in the cytoplasm. It carries out the reaction tRNA(Arg) + L-arginine + ATP = L-arginyl-tRNA(Arg) + AMP + diphosphate. The polypeptide is Arginine--tRNA ligase (Acinetobacter baumannii (strain SDF)).